Here is a 391-residue protein sequence, read N- to C-terminus: UPF0328 protein ECU06_1650 (391 aa).

The protein belongs to the UPF0328 family.

This Encephalitozoon cuniculi (strain GB-M1) (Microsporidian parasite) protein is UPF0328 protein ECU06_1650.